Consider the following 490-residue polypeptide: Keratin, type II cytoskeletal 8 (490 aa).

A compositionally biased stretch (polar residues) spans 1-27 (MSIRVTQKSYKMSTSGPRAFSSRSFTS). The tract at residues 1-48 (MSIRVTQKSYKMSTSGPRAFSSRSFTSGPGARISSSSFSRVGSSSSSF) is disordered. Residues 1 to 96 (MSIRVTQKSY…DPNIQAVRTQ (96 aa)) are head. Ser-9 bears the Phosphoserine; by PKC/PRKCE mark. Residue Lys-11 forms a Glycyl lysine isopeptide (Lys-Gly) (interchain with G-Cter in SUMO2) linkage. Phosphoserine is present on residues Ser-13, Ser-15, Ser-21, and Ser-22. Residue Arg-23 is modified to Omega-N-methylarginine. Ser-24 is subject to Phosphoserine; by PKC/PRKCE. Thr-26 is subject to Phosphothreonine. Ser-27 is subject to Phosphoserine. Arg-32 is subject to Omega-N-methylarginine. A phosphoserine mark is found at Ser-34, Ser-37, and Ser-39. Residues 34–48 (SSSSFSRVGSSSSSF) are compositionally biased toward low complexity. Residue Arg-40 is modified to Omega-N-methylarginine. Ser-43, Ser-44, and Ser-47 each carry phosphoserine. Position 49 is an asymmetric dimethylarginine; alternate (Arg-49). Position 49 is an omega-N-methylarginine; alternate (Arg-49). The residue at position 51 (Ser-51) is a Phosphoserine. Ser-80 carries the phosphoserine; by MAPK modification. The coil 1A stretch occupies residues 97 to 132 (EKEQIKSLNNKFASFIDKVRFLEQQNKMLETKWSLL). The IF rod domain occupies 97-408 (EKEQIKSLNN…KLLEGEESRL (312 aa)). An N6-malonyllysine modification is found at Lys-107. Residues Lys-128 and Lys-136 each participate in a glycyl lysine isopeptide (Lys-Gly) (interchain with G-Cter in SUMO2) cross-link. The linker 1 stretch occupies residues 133–149 (QQQKTSRSNMDNMFESY). Residues 150–241 (INNLRRQLEA…QIHEEEIREL (92 aa)) are coil 1B. Lys-203 participates in a covalent cross-link: Glycyl lysine isopeptide (Lys-Gly) (interchain with G-Cter in SUMO1); alternate. Lys-203 participates in a covalent cross-link: Glycyl lysine isopeptide (Lys-Gly) (interchain with G-Cter in SUMO2); alternate. Position 213 is an N6-acetyllysine (Lys-213). Residues 242–265 (QSQISDTSVVLSMDNSRSLDMDGI) are linker 12. Residues Ser-259 and Ser-280 each carry the phosphoserine modification. The interval 266–403 (IAEVRAQYED…ITTYRKLLEG (138 aa)) is coil 2. The segment at 267 to 387 (AEVRAQYEDI…REYQELMNVK (121 aa)) is necessary for interaction with PNN. Lys-291 participates in a covalent cross-link: Glycyl lysine isopeptide (Lys-Gly) (interchain with G-Cter in SUMO2). Residue Lys-301 forms a Glycyl lysine isopeptide (Lys-Gly) (interchain with G-Cter in SUMO2); alternate linkage. An N6-acetyllysine; alternate modification is found at Lys-301. Lys-310 participates in a covalent cross-link: Glycyl lysine isopeptide (Lys-Gly) (interchain with G-Cter in SUMO2). Residue Lys-331 forms a Glycyl lysine isopeptide (Lys-Gly) (interchain with G-Cter in SUMO2); alternate linkage. The residue at position 331 (Lys-331) is an N6-acetyllysine; alternate. Ser-336 bears the Phosphoserine mark. Lys-399 is covalently cross-linked (Glycyl lysine isopeptide (Lys-Gly) (interchain with G-Cter in SUMO2)). The tract at residues 404–490 (EESRLESGMQ…VSESSDVVSK (87 aa)) is tail. A phosphoserine mark is found at Ser-406, Ser-410, Ser-416, Ser-423, Ser-430, Ser-432, and Ser-438. Lys-479 participates in a covalent cross-link: Glycyl lysine isopeptide (Lys-Gly) (interchain with G-Cter in SUMO1); alternate. A Glycyl lysine isopeptide (Lys-Gly) (interchain with G-Cter in SUMO2); alternate cross-link involves residue Lys-479. A phosphoserine mark is found at Ser-482, Ser-484, Ser-485, and Ser-489.

Belongs to the intermediate filament family. Heterotetramer of two type I and two type II keratins. Forms a heterodimer with KRT18. Associates with KRT20. Interacts with PLEC isoform 1C, when in a heterodimer with KRT18. Interacts with PNN. When associated with KRT19, interacts with DMD. Interacts with TCHP. Interacts with APEX1. Interacts with GPER1. Interacts with EPPK1. Interacts with PKP1 and PKP2. In terms of processing, phosphorylation on serine residues is enhanced during EGF stimulation and mitosis. Ser-80 phosphorylation plays an important role in keratin filament reorganization. O-glycosylated. O-GlcNAcylation at multiple sites increases solubility, and decreases stability by inducing proteasomal degradation. Post-translationally, O-glycosylated (O-GlcNAcylated), in a cell cycle-dependent manner. Expressed in abundance in the epithelia of colon, bladder, ileum, and stomach, with lower expression observed in earskin (at protein level). Also expressed in pancreas, liver, dudenum and jejunum.

It localises to the cytoplasm. The protein resides in the nucleus. Its subcellular location is the nucleoplasm. It is found in the nucleus matrix. Together with KRT19, helps to link the contractile apparatus to dystrophin at the costameres of striated muscle. This is Keratin, type II cytoskeletal 8 (Krt8) from Mus musculus (Mouse).